The following is a 132-amino-acid chain: Protein NrdI (132 aa).

It belongs to the NrdI family.

In terms of biological role, probably involved in ribonucleotide reductase function. This chain is Protein NrdI, found in Staphylococcus epidermidis (strain ATCC 35984 / DSM 28319 / BCRC 17069 / CCUG 31568 / BM 3577 / RP62A).